A 71-amino-acid chain; its full sequence is Exodeoxyribonuclease 7 small subunit (71 aa).

The protein belongs to the XseB family. In terms of assembly, heterooligomer composed of large and small subunits.

The protein localises to the cytoplasm. The catalysed reaction is Exonucleolytic cleavage in either 5'- to 3'- or 3'- to 5'-direction to yield nucleoside 5'-phosphates.. In terms of biological role, bidirectionally degrades single-stranded DNA into large acid-insoluble oligonucleotides, which are then degraded further into small acid-soluble oligonucleotides. The sequence is that of Exodeoxyribonuclease 7 small subunit from Streptococcus equi subsp. equi (strain 4047).